Reading from the N-terminus, the 1294-residue chain is Disease resistance protein L6 (1294 aa).

A signal peptide spans 1–29; the sequence is MSYLREVATAVALLLPFILLNKFWRPNSK. The disordered stretch occupies residues 34 to 54; sequence NDDDDSTSEVDAISDSTNPSG. The 163-residue stretch at 59–221 folds into the TIR domain; the sequence is VEYEVFLSFR…AIADKVSADI (163 aa). Residues 68-73 and G101 contribute to the NAD(+) site; that span reads RGPDTR. The active site involves E135. One can recognise an NB-ARC domain in the interval 241–480; that stretch reads DDHITAVLEK…VYDRLKISYD (240 aa). LRR repeat units follow at residues 246-268, 468-492, 604-625, 626-650, 904-928, 1012-1039, 1063-1085, 1086-1109, 1179-1203, 1205-1229, and 1254-1278; these read AVLEKLSLDSENVTMVGLYGMGG, LDEVYDRLKISYDALNPEAKEIFLD, LSELRYLHAREAMLTGDFNNLL, PNLKWLELPFYKHGEDDPPLTNYTM, LENLTSLEVNDIFQTLGGDLDGLQG, FPMLKKLDLAVANITKEEDLDAIGSLEE, LQKLTTLVVKVPSLREIEGLEEL, KSLQDLYLEGCTSLGRLPLEKLKE, LEELDSLELTLDDTCSSIERISFLS, LQKLTTLIVEVPSLREIEGLAELKS, and LKNLNVLDIQGCKSLSVDHLSALKT.

This sequence belongs to the disease resistance TIR-NB-LRR family. In terms of assembly, homooligomer; homooligomerization is required for activity.

The catalysed reaction is NAD(+) + H2O = ADP-D-ribose + nicotinamide + H(+). The enzyme catalyses NADP(+) + H2O = ADP-D-ribose 2'-phosphate + nicotinamide + H(+). It catalyses the reaction NAD(+) = 2'cADPR + nicotinamide + H(+). TIR-NB-LRR receptor-like protein that confers resistance to the flax rust phytopathogenic fungus (M.lini). An NAD(+) hydrolase (NADase): in response to activation, catalyzes cleavage of NAD(+) into ADP-D-ribose (ADPR) and nicotinamide; NAD(+) cleavage triggering a defense system that promotes cell death. Also able to hydrolyze NADP(+), but not other NAD(+)-related molecules. Makes small amounts of 2' cyclic ADPR (2'cADPR). The chain is Disease resistance protein L6 from Linum usitatissimum (Flax).